Reading from the N-terminus, the 121-residue chain is Huntingtin-interacting protein K (121 aa).

The segment covering 1 to 13 has biased composition (acidic residues); that stretch reads MATEGDVELELET. The interval 1-75 is disordered; the sequence is MATEGDVELE…EQKAKQEREK (75 aa). 2 stretches are compositionally biased toward basic and acidic residues: residues 20-47 and 60-75; these read RPPE…EKEI and GDRR…EREK. Phosphoserine is present on S30. The segment at 52–121 is required for association with the NAA10-NAA15 complex; it reads LETAMSVIGD…VVEALIALTN (70 aa). A coiled-coil region spans residues 62–107; sequence RRSREQKAKQEREKELAKVTIKKEDLELIMTEMEISRAAAERSLRE.

In terms of assembly, component of the N-terminal acetyltransferase A (NatA)/HYPK complex at least composed of NAA10, NAA15 and HYPK, which has N-terminal acetyltransferase activity. Within the complex interacts with NAA10. Within the complex interacts with NAA15. Predominantly interacts with NAA15 in the NAA10-NAA15 complex (also called the NatA complex); the interaction with the NatA complex reduces the acetylation activity of the NatA complex. Interacts with HTT (via N-terminus). The NatA complex is required for HYPK stability and for reducing polyQ aggregation of HTT. Component of the N-terminal acetyltransferase E (NatE)/HYPK complex at least composed of NAA10, NAA15, NAA50 and HYPK. Within the complex interacts with NAA10 and NAA15. Does not interact with NAA50. Interaction with NAA15 reduces the capacity of NAA15 to interact with NAA50. Its capacity to interact with the NatA complex is reduced by NAA50. Does not interact with the N-terminal acetyltransferase B (NatB) complex component NAA25 or the N-terminal acetyltransferase C (NatC) complex component NAA35.

The protein localises to the nucleus. Its subcellular location is the cytoplasm. Functionally, component of several N-terminal acetyltransferase complexes. Inhibits the N-terminal acetylation activity of the N-terminal acetyltransferase NAA10-NAA15 complex (also called the NatA complex). Has chaperone-like activity preventing polyglutamine (polyQ) aggregation of HTT in neuronal cells probably while associated with the NatA complex. May play a role in the NatA complex-mediated N-terminal acetylation of PCNP. The polypeptide is Huntingtin-interacting protein K (Homo sapiens (Human)).